The following is a 117-amino-acid chain: Transcription elongation factor A protein-like 8 (117 aa).

The disordered stretch occupies residues 1-81; that stretch reads MQKSCDENEG…PEEVIRGVDE (81 aa). Residues 41–81 are compositionally biased toward basic and acidic residues; the sequence is NVREETDGSLRGEPAEPSPEPKEDTPARHLNPEEVIRGVDE. A coiled-coil region spans residues 73 to 100; that stretch reads EEVIRGVDELERLREEIRRVRNKFVLMH.

It belongs to the TFS-II family. TFA subfamily. In terms of tissue distribution, highly expressed in kidney. Moderately expressed in heart and lung. Low expression in brain and liver. Expression is up-regulated in nephrectomized kidney.

Its subcellular location is the nucleus. In terms of biological role, may be involved in transcriptional regulation. The sequence is that of Transcription elongation factor A protein-like 8 (Tceal8) from Rattus norvegicus (Rat).